An 876-amino-acid chain; its full sequence is MAAPALSGDQIRETFLKFFEGKGHRRLPSASLIPEDPTVLLTIAGMLPFKPIFLGQQVAEVPRATTSQKCIRTNDIENVGRTARHHTFFEMLGNFSFGDYFKKEAIAFAWELVTEVFQVPAERLAVSVFEEDDEAFAIWRDQIGVPEARIQRLGAKDNFWASGPTGPCGPCSEIYYDFHPELGNDGLDLEDDSRFIEVYNLVFMQYNRDAAGNLTALEKQNIDTGMGLERMAQVLQGVPNNYETDLIFPIIQAVAAIAQRDYASESESVKVSLKVIGDHLRAVTHLIADGVTASNLGRGYVLRRLIRRVVRHGRLIGIDRPFTAEIAETAIALMAAQYPNLREREAAIKAELTREEQRFLETLERGEKLLAELLAAATDQIRGEDAFVLYDTYGFPLELTQEIAEEKGLTVDLAGFEAAMAAQRQRSQAAHETIDLTVQGSLDRLAEQIHPSEFVGYGDAVATAKVTALLREGQSVEAAEAGDRVQIVLDHTPFYAESGGQVGDRGVLTGESLIVRIEDVQKESGFFVHYGQIERGLLQVGDSVTAQIDRACRRRAQANHTATHLLQAALKLIVDEGISQAGSLVAFDRLRFDFNCPRAVTPEELRQIEDQINQWIAEAHGTVVEVMPIATAKAKGAVAMFGEKYGAEVRVIDVPGVSMELCGGTHVANTAEIGLFKIISEAGVASGVRRIEAVAGPAVLEYLNVRDAVVRDLSDRFKAKPEELSDRVTALQEELKANQKQLTALKAELAIAKSDALVSQAIPVGDAQVLVETLTGVDAAALQTAAERLQQKLGDAGAVVLGSSPEEGKVTLVAAFGPAIIAKGLKAGQFIGGIAKICGGGGGGRPNLAQAGGRDASKLPEAIAAALDQLKTAIAS.

H560, H564, C662, and H666 together coordinate Zn(2+).

This sequence belongs to the class-II aminoacyl-tRNA synthetase family. Requires Zn(2+) as cofactor.

The protein localises to the cytoplasm. The catalysed reaction is tRNA(Ala) + L-alanine + ATP = L-alanyl-tRNA(Ala) + AMP + diphosphate. Functionally, catalyzes the attachment of alanine to tRNA(Ala) in a two-step reaction: alanine is first activated by ATP to form Ala-AMP and then transferred to the acceptor end of tRNA(Ala). Also edits incorrectly charged Ser-tRNA(Ala) and Gly-tRNA(Ala) via its editing domain. In Synechococcus sp. (strain ATCC 27144 / PCC 6301 / SAUG 1402/1) (Anacystis nidulans), this protein is Alanine--tRNA ligase.